Reading from the N-terminus, the 38-residue chain is Large ribosomal subunit protein bL36 (38 aa).

The protein belongs to the bacterial ribosomal protein bL36 family.

The polypeptide is Large ribosomal subunit protein bL36 (Chlorobium phaeobacteroides (strain BS1)).